The chain runs to 156 residues: H/ACA ribonucleoprotein complex subunit 2-like protein (156 aa).

The protein belongs to the eukaryotic ribosomal protein eL8 family. As to quaternary structure, component of the small nucleolar ribonucleoprotein particle containing H/ACA-type snoRNAs (H/ACA snoRNPs).

It is found in the nucleus. The protein localises to the nucleolus. In terms of biological role, required for ribosome biogenesis. Part of a complex which catalyzes pseudouridylation of rRNA. This involves the isomerization of uridine such that the ribose is subsequently attached to C5, instead of the normal N1. Pseudouridine ('psi') residues may serve to stabilize the conformation of rRNAs. The sequence is that of H/ACA ribonucleoprotein complex subunit 2-like protein from Arabidopsis thaliana (Mouse-ear cress).